A 737-amino-acid chain; its full sequence is Acetylcholinesterase (737 aa).

Residues 1–38 (MEIRGLLMGRLRLGRRMVPLGLLGVTALLLILPPFALV) form the signal peptide. Positions 141-168 (HSGATPRRRGLTRRESNSDANDNDPLVV) are disordered. Asn-220 carries N-linked (GlcNAc...) asparagine glycosylation. A disulfide bridge links Cys-228 with Cys-255. Catalysis depends on Ser-360, which acts as the Acyl-ester intermediate. Residues Cys-414 and Cys-427 are joined by a disulfide bond. Active-site charge relay system residues include Glu-486 and His-600. Residues Cys-562 and Cys-683 are joined by a disulfide bond. An N-linked (GlcNAc...) asparagine glycan is attached at Asn-670.

Belongs to the type-B carboxylesterase/lipase family.

It localises to the synapse. It carries out the reaction acetylcholine + H2O = choline + acetate + H(+). In terms of biological role, rapidly hydrolyzes choline released into the synapse. This is Acetylcholinesterase (Ace) from Anopheles gambiae (African malaria mosquito).